The chain runs to 372 residues: tRNA-specific 2-thiouridylase MnmA (372 aa).

ATP is bound by residues 16 to 23 (GMSGGVDS) and methionine 42. The tract at residues 102-104 (NPD) is interaction with target base in tRNA. Cysteine 107 serves as the catalytic Nucleophile. An intrachain disulfide couples cysteine 107 to cysteine 205. Glycine 132 is a binding site for ATP. Residues 155–157 (KDQ) form an interaction with tRNA region. Cysteine 205 functions as the Cysteine persulfide intermediate in the catalytic mechanism. The segment at 317 to 318 (RY) is interaction with tRNA.

This sequence belongs to the MnmA/TRMU family.

The protein localises to the cytoplasm. It carries out the reaction S-sulfanyl-L-cysteinyl-[protein] + uridine(34) in tRNA + AH2 + ATP = 2-thiouridine(34) in tRNA + L-cysteinyl-[protein] + A + AMP + diphosphate + H(+). Its function is as follows. Catalyzes the 2-thiolation of uridine at the wobble position (U34) of tRNA, leading to the formation of s(2)U34. This chain is tRNA-specific 2-thiouridylase MnmA, found in Shewanella baltica (strain OS195).